We begin with the raw amino-acid sequence, 343 residues long: Undecaprenyl-diphosphatase 2 (343 aa).

The next 4 membrane-spanning stretches (helical) occupy residues 21–41 (LFPVSSLGHSVLIPALIGGSW), 57–77 (PYLTFVVGLHVATAVALLVFF), 104–124 (LAWLIVAATVPVGIIGLALEH), and 129–149 (LFAKPLAAALFLTANGMILLA). The span at 179 to 193 (VPAPATVPTQTTSAP) shows a compositional bias: low complexity. The segment at 179-202 (VPAPATVPTQTTSAPGGRATARHT) is disordered. A run of 4 helical transmembrane segments spans residues 225–245 (AGVIGLFQTLALLAGISRSGI), 265–285 (FLLATPVILAAGLLKLPALAG), 294–314 (QVILGALIAGIAAYLSIRFLV), and 322–342 (LTPFAIYCLLTGALCTVRFAI).

It belongs to the UppP family.

The protein resides in the cell membrane. It carries out the reaction di-trans,octa-cis-undecaprenyl diphosphate + H2O = di-trans,octa-cis-undecaprenyl phosphate + phosphate + H(+). In terms of biological role, catalyzes the dephosphorylation of undecaprenyl diphosphate (UPP). Confers resistance to bacitracin. The protein is Undecaprenyl-diphosphatase 2 of Frankia alni (strain DSM 45986 / CECT 9034 / ACN14a).